Reading from the N-terminus, the 390-residue chain is Transforming growth factor beta-1 proprotein (390 aa).

A signal peptide spans 1–29; sequence MPPSGLRLLPLLLPLPWLLVLTPGRPAAG. Residues 30 to 74 form a straightjacket domain region; sequence LSTCKTIDMELVKRKRIEAIRGQILSKLRLASPPSQGEVPPGPLP. The arm domain stretch occupies residues 75-271; that stretch reads EAVLALYNST…ATPLERAQHL (197 aa). N-linked (GlcNAc...) asparagine glycans are attached at residues Asn-82, Asn-136, and Asn-176. Residues 226 to 252 are bowtie tail; sequence DSKDNVLHVEINGISPKRRGDLGTIHD. The Cell attachment site motif lies at 244 to 246; the sequence is RGD. 4 disulfides stabilise this stretch: Cys-285–Cys-294, Cys-293–Cys-356, Cys-322–Cys-387, and Cys-326–Cys-389.

Belongs to the TGF-beta family. As to quaternary structure, homodimer; disulfide-linked. Interacts with the serine proteases, HTRA1 and HTRA3: the interaction with either inhibits TGFB1-mediated signaling and the HTRA protease activity is required for this inhibition. May interact with THSD4; this interaction may lead to sequestration by FBN1 microfibril assembly and attenuation of TGFB signaling. Interacts with CD109, DPT and ASPN. Interacts with EFEMP2. Interacts with TSKU; the interaction contributes to regulation of the hair cycle. Interacts with TGFBR3. Homodimer; disulfide-linked. Interacts with transforming growth factor beta-1 (TGF-beta-1) chain; interaction is non-covalent and maintains TGF-beta-1 in a latent state; each latency-associated peptide (LAP) monomer interacts with TGF-beta-1 in the other monomer. Interacts with LTBP1; leading to regulation of TGF-beta-1 activation. Interacts with LRRC32/GARP; leading to regulation of TGF-beta-1 activation on the surface of activated regulatory T-cells (Tregs). Interacts with LRRC33/NRROS; leading to regulation of TGF-beta-1 activation in macrophages and microglia. Interacts (via cell attachment site) with integrins ITGAV and ITGB6 (ITGAV:ITGB6), leading to release of the active TGF-beta-1. Interacts with NREP; the interaction results in a decrease in TGFB1 autoinduction. Interacts with HSP90AB1; inhibits latent TGFB1 activation. In terms of assembly, homodimer; disulfide-linked. Interacts with TGF-beta receptors (TGFBR1 and TGFBR2), leading to signal transduction. In terms of processing, transforming growth factor beta-1 proprotein: The precursor proprotein is cleaved in the Golgi apparatus by FURIN to form Transforming growth factor beta-1 (TGF-beta-1) and Latency-associated peptide (LAP) chains, which remain non-covalently linked, rendering TGF-beta-1 inactive. Post-translationally, N-glycosylated. Deglycosylation leads to activation of Transforming growth factor beta-1 (TGF-beta-1); mechanisms triggering deglycosylation-driven activation of TGF-beta-1 are however unclear. Abundant in the bone matrix. Expressed in cardiomyocytes.

It localises to the secreted. It is found in the extracellular space. The protein localises to the extracellular matrix. Its function is as follows. Transforming growth factor beta-1 proprotein: Precursor of the Latency-associated peptide (LAP) and Transforming growth factor beta-1 (TGF-beta-1) chains, which constitute the regulatory and active subunit of TGF-beta-1, respectively. In terms of biological role, required to maintain the Transforming growth factor beta-1 (TGF-beta-1) chain in a latent state during storage in extracellular matrix. Associates non-covalently with TGF-beta-1 and regulates its activation via interaction with 'milieu molecules', such as LTBP1, LRRC32/GARP and LRRC33/NRROS, that control activation of TGF-beta-1. Interaction with LRRC33/NRROS regulates activation of TGF-beta-1 in macrophages and microglia. Interaction with LRRC32/GARP controls activation of TGF-beta-1 on the surface of activated regulatory T-cells (Tregs). Interaction with integrins (ITGAV:ITGB6 or ITGAV:ITGB8) results in distortion of the Latency-associated peptide chain and subsequent release of the active TGF-beta-1. Multifunctional protein that regulates the growth and differentiation of various cell types and is involved in various processes, such as normal development, immune function, microglia function and responses to neurodegeneration. Activation into mature form follows different steps: following cleavage of the proprotein in the Golgi apparatus, Latency-associated peptide (LAP) and Transforming growth factor beta-1 (TGF-beta-1) chains remain non-covalently linked rendering TGF-beta-1 inactive during storage in extracellular matrix. At the same time, LAP chain interacts with 'milieu molecules', such as LTBP1, LRRC32/GARP and LRRC33/NRROS that control activation of TGF-beta-1 and maintain it in a latent state during storage in extracellular milieus. TGF-beta-1 is released from LAP by integrins (ITGAV:ITGB6 or ITGAV:ITGB8): integrin-binding to LAP stabilizes an alternative conformation of the LAP bowtie tail and results in distortion of the LAP chain and subsequent release of the active TGF-beta-1. Once activated following release of LAP, TGF-beta-1 acts by binding to TGF-beta receptors (TGFBR1 and TGFBR2), which transduce signal. While expressed by many cells types, TGF-beta-1 only has a very localized range of action within cell environment thanks to fine regulation of its activation by Latency-associated peptide chain (LAP) and 'milieu molecules'. Plays an important role in bone remodeling: acts as a potent stimulator of osteoblastic bone formation, causing chemotaxis, proliferation and differentiation in committed osteoblasts. Can promote either T-helper 17 cells (Th17) or regulatory T-cells (Treg) lineage differentiation in a concentration-dependent manner. At high concentrations, leads to FOXP3-mediated suppression of RORC and down-regulation of IL-17 expression, favoring Treg cell development. At low concentrations in concert with IL-6 and IL-21, leads to expression of the IL-17 and IL-23 receptors, favoring differentiation to Th17 cells. Stimulates sustained production of collagen through the activation of CREB3L1 by regulated intramembrane proteolysis (RIP). Mediates SMAD2/3 activation by inducing its phosphorylation and subsequent translocation to the nucleus. Positively regulates odontoblastic differentiation in dental papilla cells, via promotion of IPO7-mediated translocation of phosphorylated SMAD2 to the nucleus and subsequent transcription of target genes. Can induce epithelial-to-mesenchymal transition (EMT) and cell migration in various cell types. This chain is Transforming growth factor beta-1 proprotein (Tgfb1), found in Rattus norvegicus (Rat).